Consider the following 409-residue polypeptide: Histidine--tRNA ligase (409 aa).

This sequence belongs to the class-II aminoacyl-tRNA synthetase family.

The protein localises to the cytoplasm. The enzyme catalyses tRNA(His) + L-histidine + ATP = L-histidyl-tRNA(His) + AMP + diphosphate + H(+). The chain is Histidine--tRNA ligase (hisS) from Archaeoglobus fulgidus (strain ATCC 49558 / DSM 4304 / JCM 9628 / NBRC 100126 / VC-16).